The sequence spans 328 residues: 2-hydroxyisoflavanone dehydratase (328 aa).

The Involved in the stabilization of the negatively charged intermediate by the formation of the oxyanion hole signature appears at 85–87 (HGG). Residues T173, D272, and H304 contribute to the active site.

This sequence belongs to the 'GDXG' lipolytic enzyme family.

The enzyme catalyses (2R,3S)-2,4',7-trihydroxyisoflavanone = daidzein + H2O + H(+). It carries out the reaction 2-hydroxy-2,3-dihydrogenistein = genistein + H2O + H(+). It catalyses the reaction a carboxylic ester + H2O = an alcohol + a carboxylate + H(+). It functions in the pathway secondary metabolite biosynthesis; flavonoid biosynthesis. Its function is as follows. Dehydratase that mediates the biosynthesis of isoflavonoids. Can better use 2,7-dihydroxy-4'-methoxyisoflavanone as substrate. Has also a slight carboxylesterase activity toward p-nitrophenyl butyrate. The protein is 2-hydroxyisoflavanone dehydratase (HIDM) of Glycyrrhiza echinata (Licorice).